Consider the following 155-residue polypeptide: Type 1 phosphatases regulator YPI1 (155 aa).

Residues 1-21 (MSGNQMAMGSEQQQTVGSRTV) show a composition bias toward polar residues. Disordered regions lie at residues 1–56 (MSGN…WEEN) and 79–155 (EDEE…EKKD). Ser-2 is modified (N-acetylserine). Position 22 is a phosphoserine (Ser-22). A GLC7-binding motif is present at residues 51–53 (VRW). Low complexity predominate over residues 93-102 (SSSSGSSSSE). Basic and acidic residues predominate over residues 104–114 (ENEKDLDFNER). Positions 115–128 (RQRRLERRHRKLEK) are enriched in basic residues. Ser-133 is subject to Phosphoserine. A compositionally biased stretch (basic and acidic residues) spans 144 to 155 (SEYRRKQQEKKD).

Belongs to the YPI1 family. As to quaternary structure, interacts with GLC7, PPZ1 and SDS22.

The protein resides in the nucleus. In terms of biological role, regulator of type 1 phosphatases which maintains protein phosphatase activity under strict control. Regulates the nuclear localization of type 1 phosphatase GLC7 and SDS22, and is involved in the regulation of mRNA 3'-end processing. May also regulate the activity of type 1 phosphatase PPZ1. This chain is Type 1 phosphatases regulator YPI1 (YPI1), found in Saccharomyces cerevisiae (strain YJM789) (Baker's yeast).